The primary structure comprises 211 residues: MAIGVIGRKCGMTRVFTEEGVSVPVTVIEVGPNRVSQVKTEESDGYQAVQVTVGERRASRVTKAQAGHFAKAGVEAGRGVWEFRAEAGEFEAGSSVTVEGFEAGQMIDVTGTSKGKGFAGGVKRWNFSTQDATHGNSLSHRAPGSIGQNQTPGRVFKGKKMAGHLGAERVTVQNLEVVRVDADKNLLLVKGAVPGATGGDVIVRLAVKAKA.

A compositionally biased stretch (polar residues) spans Gln-130–Ser-139. Residues Gln-130–Thr-151 are disordered. At Gln-150 the chain carries N5-methylglutamine.

Belongs to the universal ribosomal protein uL3 family. As to quaternary structure, part of the 50S ribosomal subunit. Forms a cluster with proteins L14 and L19. Methylated by PrmB.

In terms of biological role, one of the primary rRNA binding proteins, it binds directly near the 3'-end of the 23S rRNA, where it nucleates assembly of the 50S subunit. In Alcanivorax borkumensis (strain ATCC 700651 / DSM 11573 / NCIMB 13689 / SK2), this protein is Large ribosomal subunit protein uL3.